The following is a 137-amino-acid chain: Small ribosomal subunit protein bS16m (137 aa).

The N-terminal 34 residues, 1 to 34 (MVHLTTLLCKAYRGGHLTIRLALGGCTNRPFYRI), are a transit peptide targeting the mitochondrion. Thr130 carries the phosphothreonine modification.

This sequence belongs to the bacterial ribosomal protein bS16 family. As to quaternary structure, component of the mitochondrial small ribosomal subunit (mt-SSU). Mature mammalian 55S mitochondrial ribosomes consist of a small (28S) and a large (39S) subunit. The 28S small subunit contains a 12S ribosomal RNA (12S mt-rRNA) and 30 different proteins. The 39S large subunit contains a 16S rRNA (16S mt-rRNA), a copy of mitochondrial valine transfer RNA (mt-tRNA(Val)), which plays an integral structural role, and 52 different proteins. bS16m has a zinc binding site.

The protein resides in the mitochondrion. The polypeptide is Small ribosomal subunit protein bS16m (MRPS16) (Homo sapiens (Human)).